The sequence spans 475 residues: ATP synthase subunit beta (475 aa).

Residue 155–162 (GGAGVGKT) coordinates ATP.

Belongs to the ATPase alpha/beta chains family. F-type ATPases have 2 components, CF(1) - the catalytic core - and CF(0) - the membrane proton channel. CF(1) has five subunits: alpha(3), beta(3), gamma(1), delta(1), epsilon(1). CF(0) has three main subunits: a(1), b(2) and c(9-12). The alpha and beta chains form an alternating ring which encloses part of the gamma chain. CF(1) is attached to CF(0) by a central stalk formed by the gamma and epsilon chains, while a peripheral stalk is formed by the delta and b chains.

It localises to the cell inner membrane. It catalyses the reaction ATP + H2O + 4 H(+)(in) = ADP + phosphate + 5 H(+)(out). In terms of biological role, produces ATP from ADP in the presence of a proton gradient across the membrane. The catalytic sites are hosted primarily by the beta subunits. This is ATP synthase subunit beta from Rhizobium etli (strain ATCC 51251 / DSM 11541 / JCM 21823 / NBRC 15573 / CFN 42).